Consider the following 478-residue polypeptide: Zinc finger and SCAN domain-containing protein 26 (478 aa).

A Glycyl lysine isopeptide (Lys-Gly) (interchain with G-Cter in SUMO2) cross-link involves residue lysine 17. In terms of domain architecture, SCAN box spans cysteine 51–leucine 133. Disordered regions lie at residues glycine 159–glutamate 181 and glutamate 200–lysine 226. Composition is skewed to basic and acidic residues over residues glutamine 164–glutamate 181 and glutamate 207–lysine 226. The segment at tyrosine 231 to histidine 253 adopts a C2H2-type 1; degenerate zinc-finger fold. 7 C2H2-type zinc fingers span residues histidine 282–histidine 304, tyrosine 310–histidine 332, tyrosine 338–histidine 360, cysteine 366–histidine 388, histidine 394–histidine 416, phenylalanine 422–histidine 444, and tyrosine 450–histidine 472.

Its subcellular location is the nucleus. Functionally, may be involved in transcriptional regulation. The protein is Zinc finger and SCAN domain-containing protein 26 (ZSCAN26) of Homo sapiens (Human).